The following is a 410-amino-acid chain: Schlafen-like protein 1 (410 aa).

Disordered regions lie at residues 1 to 20 (MSLRKRSAQTQMWESPVMSQ) and 141 to 199 (LHHR…SGVR). The segment covering 8 to 20 (AQTQMWESPVMSQ) has biased composition (polar residues). Residues 154–173 (SHSPGPSPGPSPGLRHPPLP) show a composition bias toward pro residues. 264 to 271 (GVEDSGLV) contributes to the ATP binding site. Residues 370-401 (QKWAMELGKLEEKVKVLTLEKEQLQQQLRQRQ) are a coiled coil.

It belongs to the Schlafen family. Subgroup I subfamily.

The chain is Schlafen-like protein 1 (Slfnl1) from Mus musculus (Mouse).